The chain runs to 110 residues: Small ribosomal subunit protein eS24 (110 aa).

Positions 91–110 (RNKVEEQAEEAEEAEAGAAE) are disordered. Residues 97 to 110 (QAEEAEEAEAGAAE) are compositionally biased toward acidic residues.

This sequence belongs to the eukaryotic ribosomal protein eS24 family.

The sequence is that of Small ribosomal subunit protein eS24 from Archaeoglobus fulgidus (strain ATCC 49558 / DSM 4304 / JCM 9628 / NBRC 100126 / VC-16).